Consider the following 306-residue polypeptide: Oxygen-dependent coproporphyrinogen-III oxidase (306 aa).

Ser93 provides a ligand contact to substrate. A divalent metal cation-binding residues include His97 and His107. His107 functions as the Proton donor in the catalytic mechanism. Residue 109 to 111 (NVR) coordinates substrate. Residues His146 and His176 each coordinate a divalent metal cation. An important for dimerization region spans residues 241–276 (YVEYNLVYDRGTLFGLQSGGRTESILMSLPPQVAWG). Residue 259 to 261 (GGR) coordinates substrate.

The protein belongs to the aerobic coproporphyrinogen-III oxidase family. As to quaternary structure, homodimer. The cofactor is a divalent metal cation.

It localises to the cytoplasm. The catalysed reaction is coproporphyrinogen III + O2 + 2 H(+) = protoporphyrinogen IX + 2 CO2 + 2 H2O. It participates in porphyrin-containing compound metabolism; protoporphyrin-IX biosynthesis; protoporphyrinogen-IX from coproporphyrinogen-III (O2 route): step 1/1. Functionally, involved in the heme biosynthesis. Catalyzes the aerobic oxidative decarboxylation of propionate groups of rings A and B of coproporphyrinogen-III to yield the vinyl groups in protoporphyrinogen-IX. This chain is Oxygen-dependent coproporphyrinogen-III oxidase, found in Stutzerimonas stutzeri (strain A1501) (Pseudomonas stutzeri).